A 128-amino-acid chain; its full sequence is Putative pre-16S rRNA nuclease (128 aa).

Belongs to the YqgF nuclease family.

Its subcellular location is the cytoplasm. In terms of biological role, could be a nuclease involved in processing of the 5'-end of pre-16S rRNA. This is Putative pre-16S rRNA nuclease from Campylobacter lari (strain RM2100 / D67 / ATCC BAA-1060).